We begin with the raw amino-acid sequence, 295 residues long: Small ribosomal subunit protein uS2 (295 aa).

A disordered region spans residues 263–295 (KKFSKTKNIDEETNTEFEKALNDADENKNSDNA). Residues 278-295 (EFEKALNDADENKNSDNA) show a composition bias toward basic and acidic residues.

It belongs to the universal ribosomal protein uS2 family.

The chain is Small ribosomal subunit protein uS2 from Rickettsia peacockii (strain Rustic).